Reading from the N-terminus, the 905-residue chain is Alanine--tRNA ligase (905 aa).

Zn(2+)-binding residues include histidine 582, histidine 586, cysteine 687, and histidine 691.

It belongs to the class-II aminoacyl-tRNA synthetase family. Zn(2+) is required as a cofactor.

The protein localises to the cytoplasm. It catalyses the reaction tRNA(Ala) + L-alanine + ATP = L-alanyl-tRNA(Ala) + AMP + diphosphate. Functionally, catalyzes the attachment of alanine to tRNA(Ala) in a two-step reaction: alanine is first activated by ATP to form Ala-AMP and then transferred to the acceptor end of tRNA(Ala). Also edits incorrectly charged Ser-tRNA(Ala) and Gly-tRNA(Ala) via its editing domain. This is Alanine--tRNA ligase from Mycoplasma mobile (strain ATCC 43663 / 163K / NCTC 11711) (Mesomycoplasma mobile).